A 380-amino-acid chain; its full sequence is Homoserine O-acetyltransferase (380 aa).

One can recognise an AB hydrolase-1 domain in the interval 70-366 (NAVLVFHALT…SPHGHDAFLI (297 aa)). The active-site Nucleophile is Ser186. Arg250 lines the substrate pocket. Catalysis depends on residues Asp333 and His361. Position 362 (Asp362) interacts with substrate.

The protein belongs to the AB hydrolase superfamily. MetX family. Homodimer.

It localises to the cytoplasm. It catalyses the reaction L-homoserine + acetyl-CoA = O-acetyl-L-homoserine + CoA. It functions in the pathway amino-acid biosynthesis; L-methionine biosynthesis via de novo pathway; O-acetyl-L-homoserine from L-homoserine: step 1/1. Functionally, transfers an acetyl group from acetyl-CoA to L-homoserine, forming acetyl-L-homoserine. This Thermus thermophilus (strain ATCC 27634 / DSM 579 / HB8) protein is Homoserine O-acetyltransferase.